We begin with the raw amino-acid sequence, 110 residues long: Large ribosomal subunit protein uL22 (110 aa).

The protein belongs to the universal ribosomal protein uL22 family. As to quaternary structure, part of the 50S ribosomal subunit.

This protein binds specifically to 23S rRNA; its binding is stimulated by other ribosomal proteins, e.g. L4, L17, and L20. It is important during the early stages of 50S assembly. It makes multiple contacts with different domains of the 23S rRNA in the assembled 50S subunit and ribosome. In terms of biological role, the globular domain of the protein is located near the polypeptide exit tunnel on the outside of the subunit, while an extended beta-hairpin is found that lines the wall of the exit tunnel in the center of the 70S ribosome. The protein is Large ribosomal subunit protein uL22 of Yersinia enterocolitica serotype O:8 / biotype 1B (strain NCTC 13174 / 8081).